Here is a 414-residue protein sequence, read N- to C-terminus: Mu-like prophage FluMu F protein (414 aa).

The protein to phage Mu protein F.

In terms of biological role, involved in virion morphogenesis. This Haemophilus influenzae (strain ATCC 51907 / DSM 11121 / KW20 / Rd) protein is Mu-like prophage FluMu F protein.